Reading from the N-terminus, the 460-residue chain is Proline--tRNA ligase (460 aa).

This sequence belongs to the class-II aminoacyl-tRNA synthetase family. ProS type 3 subfamily. In terms of assembly, homodimer.

The protein resides in the cytoplasm. The enzyme catalyses tRNA(Pro) + L-proline + ATP = L-prolyl-tRNA(Pro) + AMP + diphosphate. Its function is as follows. Catalyzes the attachment of proline to tRNA(Pro) in a two-step reaction: proline is first activated by ATP to form Pro-AMP and then transferred to the acceptor end of tRNA(Pro). This chain is Proline--tRNA ligase, found in Methanococcus maripaludis (strain C6 / ATCC BAA-1332).